Reading from the N-terminus, the 469-residue chain is Putative dipeptidase SAUSA300_1697 (469 aa).

His84 contributes to the Zn(2+) binding site. The active site involves Asp86. Asp115 is a Zn(2+) binding site. Glu149 (proton acceptor) is an active-site residue. 3 residues coordinate Zn(2+): Glu150, Asp173, and His440.

The protein belongs to the peptidase M20A family. It depends on Zn(2+) as a cofactor.

In Staphylococcus aureus (strain USA300), this protein is Putative dipeptidase SAUSA300_1697.